Here is a 428-residue protein sequence, read N- to C-terminus: Tryptophan synthase beta chain (428 aa).

Lys100 is modified (N6-(pyridoxal phosphate)lysine).

Belongs to the TrpB family. In terms of assembly, tetramer of two alpha and two beta chains. It depends on pyridoxal 5'-phosphate as a cofactor.

It catalyses the reaction (1S,2R)-1-C-(indol-3-yl)glycerol 3-phosphate + L-serine = D-glyceraldehyde 3-phosphate + L-tryptophan + H2O. The protein operates within amino-acid biosynthesis; L-tryptophan biosynthesis; L-tryptophan from chorismate: step 5/5. Functionally, the beta subunit is responsible for the synthesis of L-tryptophan from indole and L-serine. This is Tryptophan synthase beta chain from Streptomyces avermitilis (strain ATCC 31267 / DSM 46492 / JCM 5070 / NBRC 14893 / NCIMB 12804 / NRRL 8165 / MA-4680).